Here is a 310-residue protein sequence, read N- to C-terminus: p-hydroxybenzoic acid efflux pump subunit AaeA (310 aa).

The chain crosses the membrane as a helical span at residues 12–32; that stretch reads AITVVLVILAFIAIFNAWVYY.

Belongs to the membrane fusion protein (MFP) (TC 8.A.1) family.

The protein localises to the cell inner membrane. Its function is as follows. Forms an efflux pump with AaeB. The sequence is that of p-hydroxybenzoic acid efflux pump subunit AaeA from Escherichia coli O139:H28 (strain E24377A / ETEC).